Consider the following 818-residue polypeptide: Patatin-like phospholipase domain-containing protein YALI0D16379g (818 aa).

Disordered regions lie at residues 1–50 (MLKL…RDVN) and 154–178 (EEKR…KTKE). Positions 22–38 (SQQLTLDSPEGSETSSR) are enriched in polar residues. A compositionally biased stretch (basic and acidic residues) spans 164–178 (KDKEGSEGDKTKTKE). A helical membrane pass occupies residues 223–243 (WPALFFIGMWLLFLTTIYASV). Residues 398–589 (LCLSGGGCFA…RTDIPVDALN (192 aa)) enclose the PNPLA domain. The GXSXG signature appears at 429–433 (GTSGG). Serine 431 (nucleophile) is an active-site residue. Aspartate 576 acts as the Proton acceptor in catalysis. Residues 781–805 (AGTDISSSNSDYDHEPQWEMDEGDS) are disordered.

This sequence belongs to the PLPL family.

The protein localises to the membrane. Its function is as follows. Probable lipid hydrolase. This is Patatin-like phospholipase domain-containing protein YALI0D16379g from Yarrowia lipolytica (strain CLIB 122 / E 150) (Yeast).